Reading from the N-terminus, the 141-residue chain is Nucleoside diphosphate kinase (141 aa).

ATP-binding residues include lysine 11, phenylalanine 59, arginine 87, threonine 93, arginine 104, and asparagine 114. Catalysis depends on histidine 117, which acts as the Pros-phosphohistidine intermediate.

Belongs to the NDK family. As to quaternary structure, homotetramer. Mg(2+) serves as cofactor.

It is found in the cytoplasm. It catalyses the reaction a 2'-deoxyribonucleoside 5'-diphosphate + ATP = a 2'-deoxyribonucleoside 5'-triphosphate + ADP. The catalysed reaction is a ribonucleoside 5'-diphosphate + ATP = a ribonucleoside 5'-triphosphate + ADP. In terms of biological role, major role in the synthesis of nucleoside triphosphates other than ATP. The ATP gamma phosphate is transferred to the NDP beta phosphate via a ping-pong mechanism, using a phosphorylated active-site intermediate. This Vibrio parahaemolyticus serotype O3:K6 (strain RIMD 2210633) protein is Nucleoside diphosphate kinase.